The following is a 251-amino-acid chain: Diphthine synthase (251 aa).

S-adenosyl-L-methionine-binding positions include Leu-9, Asp-84, Val-87, 112-113 (SI), Leu-160, Ala-194, and His-219.

This sequence belongs to the diphthine synthase family. Homodimer.

The catalysed reaction is 2-[(3S)-amino-3-carboxypropyl]-L-histidyl-[translation elongation factor 2] + 3 S-adenosyl-L-methionine = diphthine-[translation elongation factor 2] + 3 S-adenosyl-L-homocysteine + 3 H(+). It participates in protein modification; peptidyl-diphthamide biosynthesis. Functionally, S-adenosyl-L-methionine-dependent methyltransferase that catalyzes the trimethylation of the amino group of the modified target histidine residue in translation elongation factor 2 (EF-2), to form an intermediate called diphthine. The three successive methylation reactions represent the second step of diphthamide biosynthesis. In Archaeoglobus fulgidus (strain ATCC 49558 / DSM 4304 / JCM 9628 / NBRC 100126 / VC-16), this protein is Diphthine synthase.